The sequence spans 212 residues: Ribosomal RNA small subunit methyltransferase G (212 aa).

Residues Gly-80, Leu-85, 131–132 (AE), and Arg-146 each bind S-adenosyl-L-methionine.

The protein belongs to the methyltransferase superfamily. RNA methyltransferase RsmG family.

The protein resides in the cytoplasm. It carries out the reaction guanosine(527) in 16S rRNA + S-adenosyl-L-methionine = N(7)-methylguanosine(527) in 16S rRNA + S-adenosyl-L-homocysteine. Its function is as follows. Specifically methylates the N7 position of guanine in position 527 of 16S rRNA. The polypeptide is Ribosomal RNA small subunit methyltransferase G (Stenotrophomonas maltophilia (strain K279a)).